Consider the following 413-residue polypeptide: Succinate--CoA ligase [ADP-forming] subunit beta, mitochondrial (413 aa).

The N-terminal 2 residues, 1-2 (RR), are a transit peptide targeting the mitochondrion. In terms of domain architecture, ATP-grasp spans 11–238 (MGLLQEAGIS…SNSAYRQKKI (228 aa)). ATP is bound by residues lysine 48 and 55–57 (GRG). Mg(2+) contacts are provided by asparagine 208 and aspartate 222. Residues asparagine 273 and 330 to 332 (GIM) each bind substrate.

The protein belongs to the succinate/malate CoA ligase beta subunit family. ATP-specific subunit beta subfamily. In terms of assembly, heterodimer of an alpha and a beta subunit. The beta subunit determines specificity for ATP. Mg(2+) serves as cofactor. As to expression, widely expressed. Not present in liver.

The protein resides in the mitochondrion. The enzyme catalyses succinate + ATP + CoA = succinyl-CoA + ADP + phosphate. It functions in the pathway carbohydrate metabolism; tricarboxylic acid cycle; succinate from succinyl-CoA (ligase route): step 1/1. Its function is as follows. ATP-specific succinyl-CoA synthetase functions in the citric acid cycle (TCA), coupling the hydrolysis of succinyl-CoA to the synthesis of ATP and thus represents the only step of substrate-level phosphorylation in the TCA. The beta subunit provides nucleotide specificity of the enzyme and binds the substrate succinate, while the binding sites for coenzyme A and phosphate are found in the alpha subunit. The protein is Succinate--CoA ligase [ADP-forming] subunit beta, mitochondrial of Columba livia (Rock dove).